The sequence spans 106 residues: 3-phenylpropionate/cinnamic acid dioxygenase ferredoxin subunit (106 aa).

One can recognise a Rieske domain in the interval 4 to 99 (IYACPVADVP…VHVEGGDIFI (96 aa)). [2Fe-2S] cluster-binding residues include Cys-42, His-44, Cys-62, and His-65.

The protein belongs to the bacterial ring-hydroxylating dioxygenase ferredoxin component family. As to quaternary structure, this dioxygenase system consists of four proteins: the two subunits of the hydroxylase component (HcaE and HcaF), a ferredoxin (HcaC) and a ferredoxin reductase (HcaD). Requires [2Fe-2S] cluster as cofactor.

Its pathway is aromatic compound metabolism; 3-phenylpropanoate degradation. Part of the multicomponent 3-phenylpropionate dioxygenase, that converts 3-phenylpropionic acid (PP) and cinnamic acid (CI) into 3-phenylpropionate-dihydrodiol (PP-dihydrodiol) and cinnamic acid-dihydrodiol (CI-dihydrodiol), respectively. This protein seems to be a 2Fe-2S ferredoxin. This Escherichia coli O139:H28 (strain E24377A / ETEC) protein is 3-phenylpropionate/cinnamic acid dioxygenase ferredoxin subunit.